The chain runs to 357 residues: Chorismate synthase (357 aa).

NADP(+) is bound at residue arginine 48. FMN is bound by residues 125–127, 238–239, glycine 282, 297–301, and arginine 323; these read RSS, NA, and KPTSS.

This sequence belongs to the chorismate synthase family. Homotetramer. Requires FMNH2 as cofactor.

The enzyme catalyses 5-O-(1-carboxyvinyl)-3-phosphoshikimate = chorismate + phosphate. It participates in metabolic intermediate biosynthesis; chorismate biosynthesis; chorismate from D-erythrose 4-phosphate and phosphoenolpyruvate: step 7/7. Its function is as follows. Catalyzes the anti-1,4-elimination of the C-3 phosphate and the C-6 proR hydrogen from 5-enolpyruvylshikimate-3-phosphate (EPSP) to yield chorismate, which is the branch point compound that serves as the starting substrate for the three terminal pathways of aromatic amino acid biosynthesis. This reaction introduces a second double bond into the aromatic ring system. The chain is Chorismate synthase from Gluconacetobacter diazotrophicus (strain ATCC 49037 / DSM 5601 / CCUG 37298 / CIP 103539 / LMG 7603 / PAl5).